A 273-amino-acid polypeptide reads, in one-letter code: Dermonecrotic toxin (273 aa).

Mg(2+) contacts are provided by E20 and D22. H35 acts as the Nucleophile in catalysis. C39 and C45 are oxidised to a cystine. A Mg(2+)-binding site is contributed by D79.

It belongs to the arthropod phospholipase D family. Class I subfamily. Mg(2+) is required as a cofactor. As to expression, expressed by the venom gland.

It is found in the secreted. The catalysed reaction is an N-(acyl)-sphingosylphosphocholine = an N-(acyl)-sphingosyl-1,3-cyclic phosphate + choline. It catalyses the reaction an N-(acyl)-sphingosylphosphoethanolamine = an N-(acyl)-sphingosyl-1,3-cyclic phosphate + ethanolamine. The enzyme catalyses a 1-acyl-sn-glycero-3-phosphocholine = a 1-acyl-sn-glycero-2,3-cyclic phosphate + choline. It carries out the reaction a 1-acyl-sn-glycero-3-phosphoethanolamine = a 1-acyl-sn-glycero-2,3-cyclic phosphate + ethanolamine. In terms of biological role, dermonecrotic toxins cleave the phosphodiester linkage between the phosphate and headgroup of certain phospholipids (sphingolipid and lysolipid substrates), forming an alcohol (often choline) and a cyclic phosphate. This toxin acts on sphingomyelin (SM). It may also act on ceramide phosphoethanolamine (CPE), lysophosphatidylcholine (LPC) and lysophosphatidylethanolamine (LPE), but not on lysophosphatidylserine (LPS), and lysophosphatidylglycerol (LPG). It acts by transphosphatidylation, releasing exclusively cyclic phosphate products as second products. Induces dermonecrosis, hemolysis, increased vascular permeability, edema, inflammatory response, and platelet aggregation. The sequence is that of Dermonecrotic toxin from Loxosceles laeta (South American recluse spider).